Consider the following 128-residue polypeptide: Lymphocyte antigen 6D (128 aa).

Residues 1–20 (MRTALLLLAALAVATGPALT) form the signal peptide. The region spanning 21 to 108 (LRCHVCTSSS…AAPTRTALAH (88 aa)) is the UPAR/Ly6 domain. 5 cysteine pairs are disulfide-bonded: Cys-23-Cys-45, Cys-26-Cys-32, Cys-38-Cys-63, Cys-67-Cys-86, and Cys-87-Cys-92. Asn-98 is lipidated: GPI-anchor amidated asparagine. A propeptide spans 99–128 (AAPTRTALAHSALSLGLALSLLAVILAPSL) (removed in mature form).

Expressed exclusively at the outer cell surface of transitional epithelia and the keratinocyte of stratified squamous epithelia.

It localises to the cell membrane. In terms of biological role, may act as a specification marker at earliest stage specification of lymphocytes between B- and T-cell development. Marks the earliest stage of B-cell specification. The chain is Lymphocyte antigen 6D (LY6D) from Homo sapiens (Human).